The chain runs to 438 residues: Alkylcitrate synthase tstJ (438 aa).

Active-site residues include His309 and Asp365.

This sequence belongs to the citrate synthase family.

It catalyses the reaction (2E,10E)-dode-2,10-dicenoyl-CoA + oxaloacetate + H2O = (4E,11E)-2-hydroxytrideca-4,11-dien-1,2,3-tricarboxylate + CoA + H(+). It functions in the pathway secondary metabolite biosynthesis. In terms of biological role, alkylcitrate synthase; part of the gene cluster that mediates the biosynthesis of the antihypercholesterolemic agents phomoidrides which are dimeric anhydrides. Within the pathway, the alkylcitrate synthase (ACS) tstJ and the alkylcitrate dehydratase (ACDH) tstI produce the decarboxylated monomeric anhydrides by coupling the C12-fatty acyl product from phiA with oxalacetic acid. The pathway begins with the highly reducing polyketide synthase tstA that catalyzes the formation of a C12-fatty acyl-ACP, starting from one acetate and 5 malonate units. The hydrolase tstM is involved in the release of the C12-fatty acyl chain from phiA. The alkylcitrate synthase (ACS) tstJ and the alkylcitrate dehydratase (ACDH) tstI then give rise to decarboxylated monomeric anhydrides by coupling the C12-fatty acyl chain with oxalacetic acid. The cyclase tstC is responsible for the dimerization of the monomeric anhydrides which leads to the production of prephomoidride that contains the characteristic bicyclo[4.3.1]deca-1,6-diene system of phomoidrides. Iterative oxidation catalyzed by the alpha-ketoglutarate-dependent dioxygenase tstK produced then phomoidride A. Finally, the methyltransferase tstE converts phomoidride A to phomoidride B via an acetalization reaction. The phosphatidylethanolamine-binding protein tstB and tstN are not essential for dimerization and their functions have still to be determined. This is Alkylcitrate synthase tstJ from Talaromyces stipitatus (strain ATCC 10500 / CBS 375.48 / QM 6759 / NRRL 1006) (Penicillium stipitatum).